The following is a 411-amino-acid chain: Translation initiation factor 2 subunit gamma (411 aa).

One can recognise a tr-type G domain in the interval 9 to 201 (QPSVNIGMVG…AIEKYIPSPK (193 aa)). The tract at residues 18-25 (GHVDHGKS) is G1. Positions 21, 25, 46, and 48 each coordinate Mg(2+). Position 21 to 26 (21 to 26 (DHGKST)) interacts with GTP. A G2 region spans residues 46–50 (GISIK). The interval 88 to 91 (DAPG) is G3. Residues 144–147 (NKID) and 179–181 (SAY) contribute to the GTP site. A G4 region spans residues 144-147 (NKID). The G5 stretch occupies residues 179-181 (SAY).

The protein belongs to the TRAFAC class translation factor GTPase superfamily. Classic translation factor GTPase family. EIF2G subfamily. In terms of assembly, heterotrimer composed of an alpha, a beta and a gamma chain. Mg(2+) is required as a cofactor.

The catalysed reaction is GTP + H2O = GDP + phosphate + H(+). Its function is as follows. eIF-2 functions in the early steps of protein synthesis by forming a ternary complex with GTP and initiator tRNA. This Thermoplasma acidophilum (strain ATCC 25905 / DSM 1728 / JCM 9062 / NBRC 15155 / AMRC-C165) protein is Translation initiation factor 2 subunit gamma.